Here is a 155-residue protein sequence, read N- to C-terminus: Acyl-CoA-binding domain-containing protein 3 (155 aa).

In terms of domain architecture, ACB spans L3–A88. An acyl-CoA-binding positions include K15, Y30 to K34, K56, and Y75.

Belongs to the ACBP family. As to expression, highly expressed in leaves. Expressed at low levels in roots and seeds.

The protein localises to the cytoplasm. Its subcellular location is the cytosol. Binds medium- and long-chain acyl-CoA esters with high affinity. Can interact in vitro with linolenoyl-CoA. Binds phosphatidic acid (PA) and phosphatidylcholine (PC) in vitro. May play a role in the biosynthesis of phospholipids. This Oryza sativa subsp. japonica (Rice) protein is Acyl-CoA-binding domain-containing protein 3.